Reading from the N-terminus, the 414-residue chain is Na(+)-translocating NADH-quinone reductase subunit B (414 aa).

The next 4 membrane-spanning stretches (helical) occupy residues Trp23 to Val40, Ile56 to Gly76, Phe129 to Met149, and Ile164 to Thr184. Thr236 carries the post-translational modification FMN phosphoryl threonine. A run of 5 helical transmembrane segments spans residues Ile268–Val288, Ile297–Ser317, Met322–Phe342, Trp358–Tyr378, and Gly381–Val401.

This sequence belongs to the NqrB/RnfD family. In terms of assembly, composed of six subunits; NqrA, NqrB, NqrC, NqrD, NqrE and NqrF. FMN is required as a cofactor.

The protein resides in the cell inner membrane. The catalysed reaction is a ubiquinone + n Na(+)(in) + NADH + H(+) = a ubiquinol + n Na(+)(out) + NAD(+). Functionally, NQR complex catalyzes the reduction of ubiquinone-1 to ubiquinol by two successive reactions, coupled with the transport of Na(+) ions from the cytoplasm to the periplasm. NqrA to NqrE are probably involved in the second step, the conversion of ubisemiquinone to ubiquinol. In Vibrio vulnificus (strain CMCP6), this protein is Na(+)-translocating NADH-quinone reductase subunit B.